The sequence spans 697 residues: Sialidase B (697 aa).

Residues 1–29 form the signal peptide; it reads MNKRGLYSKLGISVVGISLLMGVPTLIHA. Arg-245 serves as a coordination point for substrate. Asp-270 functions as the Proton acceptor in the catalytic mechanism. 3 BNR repeats span residues 280–291, 462–473, and 517–528; these read SYSDDNGKTWSE, TTSQNRGESWEQ, and LISDDSGQTWKK. Residue Glu-541 is part of the active site. Arg-557 is a binding site for substrate. A BNR 4 repeat occupies 566–577; the sequence is MTSRDSGETWSK. Arg-619 lines the substrate pocket. The active-site Nucleophile is Tyr-653.

The protein belongs to the glycosyl hydrolase 33 family.

It catalyses the reaction Hydrolysis of alpha-(2-&gt;3)-, alpha-(2-&gt;6)-, alpha-(2-&gt;8)- glycosidic linkages of terminal sialic acid residues in oligosaccharides, glycoproteins, glycolipids, colominic acid and synthetic substrates.. This is Sialidase B (nanB) from Streptococcus pneumoniae serotype 4 (strain ATCC BAA-334 / TIGR4).